Here is a 298-residue protein sequence, read N- to C-terminus: Lipoyl synthase (298 aa).

Residues Cys-40, Cys-45, Cys-51, Cys-67, Cys-71, Cys-74, and Ser-280 each coordinate [4Fe-4S] cluster. Positions Ala-53–Ser-269 constitute a Radical SAM core domain.

It belongs to the radical SAM superfamily. Lipoyl synthase family. [4Fe-4S] cluster serves as cofactor.

It is found in the cytoplasm. It carries out the reaction [[Fe-S] cluster scaffold protein carrying a second [4Fe-4S](2+) cluster] + N(6)-octanoyl-L-lysyl-[protein] + 2 oxidized [2Fe-2S]-[ferredoxin] + 2 S-adenosyl-L-methionine + 4 H(+) = [[Fe-S] cluster scaffold protein] + N(6)-[(R)-dihydrolipoyl]-L-lysyl-[protein] + 4 Fe(3+) + 2 hydrogen sulfide + 2 5'-deoxyadenosine + 2 L-methionine + 2 reduced [2Fe-2S]-[ferredoxin]. The protein operates within protein modification; protein lipoylation via endogenous pathway; protein N(6)-(lipoyl)lysine from octanoyl-[acyl-carrier-protein]. Its function is as follows. Catalyzes the radical-mediated insertion of two sulfur atoms into the C-6 and C-8 positions of the octanoyl moiety bound to the lipoyl domains of lipoate-dependent enzymes, thereby converting the octanoylated domains into lipoylated derivatives. The chain is Lipoyl synthase from Bacillus cereus (strain B4264).